We begin with the raw amino-acid sequence, 1154 residues long: DNA-directed RNA polymerase, mitochondrial (1154 aa).

The N-terminal 30 residues, 1 to 30 (MLRRKIQTYLSRSHIRRGLCGLRFFQTQRL), are a transit peptide targeting the mitochondrion. The disordered stretch occupies residues 221 to 243 (ESENGKDQNGDSSLKEKQPDVET). Over residues 223 to 240 (ENGKDQNGDSSLKEKQPD) the composition is skewed to basic and acidic residues. Active-site residues include aspartate 821, lysine 890, and aspartate 1061.

The protein belongs to the phage and mitochondrial RNA polymerase family.

The protein resides in the mitochondrion. The enzyme catalyses RNA(n) + a ribonucleoside 5'-triphosphate = RNA(n+1) + diphosphate. DNA-dependent RNA polymerase catalyzes the transcription of DNA into RNA using the four ribonucleoside triphosphates as substrates. Combines in the mitochondrion with mitochondrial transcription factor mtf1 as a holoenzyme to recognize and initiate transcription at the core mitochondrial promoters. The polypeptide is DNA-directed RNA polymerase, mitochondrial (rpo41) (Schizosaccharomyces pombe (strain 972 / ATCC 24843) (Fission yeast)).